A 264-amino-acid chain; its full sequence is ORC1-type DNA replication protein 2 (264 aa).

ATP contacts are provided by residues 73-77 (TGKSL), Y220, and R232.

It belongs to the CDC6/cdc18 family.

Its function is as follows. Involved in regulation of DNA replication. The protein is ORC1-type DNA replication protein 2 (orc2) of Halobacterium salinarum (strain ATCC 700922 / JCM 11081 / NRC-1) (Halobacterium halobium).